The following is a 137-amino-acid chain: Large ribosomal subunit protein uL16c (137 aa).

Belongs to the universal ribosomal protein uL16 family. As to quaternary structure, part of the 50S ribosomal subunit.

Its subcellular location is the plastid. It localises to the chloroplast. The sequence is that of Large ribosomal subunit protein uL16c from Thalassiosira pseudonana (Marine diatom).